The chain runs to 415 residues: MSVQAPSVPDLRQQVHDAARRARSAARGLATLSTDTKDRALRTAADHVLMNTRAILEANEADLDTARSSGTPEAMLDRLALTPARVEGIADGLRQVAGLPDPVGEVLRGRTLPNGLQLRQQRVPLGVVGIVYEGRPNVTVDAFGLTLKSGNAVLLRGSSSAARSNAALVDALRAALATELLDVDAVQLLPSADRASVTHLIQARGLVDVVIPRGGAGLIDAVVRDAQVPTIETGVGNCHVYVHSSADLDTAESIVLNAKTRRPSVCNAAESLLIDAAVADVAVPRLTDALQAAGVTVHIDPTEDELRAEFLSMDIALAIVDGVDGAISHINEYGTGHTEAIVTTDLAAAQRFTERVDAAAVMVNASTAFTDGEQFGFGAEIGISTQKLHARGPMGLPELTSTKWIVWGDGHTRPA.

This sequence belongs to the gamma-glutamyl phosphate reductase family.

It localises to the cytoplasm. It carries out the reaction L-glutamate 5-semialdehyde + phosphate + NADP(+) = L-glutamyl 5-phosphate + NADPH + H(+). It participates in amino-acid biosynthesis; L-proline biosynthesis; L-glutamate 5-semialdehyde from L-glutamate: step 2/2. Catalyzes the NADPH-dependent reduction of L-glutamate 5-phosphate into L-glutamate 5-semialdehyde and phosphate. The product spontaneously undergoes cyclization to form 1-pyrroline-5-carboxylate. The chain is Gamma-glutamyl phosphate reductase from Mycolicibacterium gilvum (strain PYR-GCK) (Mycobacterium gilvum (strain PYR-GCK)).